The following is a 208-amino-acid chain: Putative 3-methyladenine DNA glycosylase (208 aa).

Belongs to the DNA glycosylase MPG family.

The chain is Putative 3-methyladenine DNA glycosylase from Lactobacillus delbrueckii subsp. bulgaricus (strain ATCC BAA-365 / Lb-18).